The sequence spans 426 residues: Synaptotagmin-13 (426 aa).

Residues 1 to 6 are Vesicular-facing; that stretch reads MVLSVP. The helical transmembrane segment at 7 to 29 threads the bilayer; that stretch reads VIALGATLGTATSILALCGVTCL. Topologically, residues 30–426 are cytoplasmic; the sequence is CRHMHPKKGL…QIAMWHQLHL (397 aa). 2 C2 domains span residues 158 to 275 and 287 to 422; these read QAPK…AQWG and GAGE…AMWH.

This sequence belongs to the synaptotagmin family. Interacts with NRXN1. As to expression, expressed in brain, heart, spleen, lung and testis.

It is found in the cytoplasmic vesicle membrane. May be involved in transport vesicle docking to the plasma membrane. This chain is Synaptotagmin-13 (Syt13), found in Mus musculus (Mouse).